Consider the following 286-residue polypeptide: MERRVRVKSWVEENRASFQPPVCNKLMHQEQLKIMFVGGPNTRKDYHIEEGEEVFYQLEGDMILRVLEQGQHRDVPIRQGEIFLLPARVPHSPQRFANTMGLVIERRRLESELDGLRYYVGDTEDVLFEKWFHCKDLGTQLAPIIQEFFHSEQYRTGKPNPDQLLKELPFPLNTRSIMKPMSLKAWLDGHSRELQAGTSLSLFGDSYETQVIAHGQGSSKGPRQDVDVWLWQQEGSSKVTMGGQCIALAPDDSLLVPAGTSYVWERAQGSVALSVTQDPARKKPWW.

The interval 1 to 160 (MERRVRVKSW…SEQYRTGKPN (160 aa)) is domain A (catalytic). An O2-binding site is contributed by Arg43. Fe cation is bound by residues His47, Glu53, and His91. Glu53 contributes to the substrate binding site. Substrate-binding residues include Arg95 and Glu105. The segment at 161 to 177 (PDQLLKELPFPLNTRSI) is linker. Positions 178 to 286 (MKPMSLKAWL…QDPARKKPWW (109 aa)) are domain B.

The protein belongs to the 3-HAO family. As to quaternary structure, monomer. The cofactor is Fe(2+).

Its subcellular location is the cytoplasm. It is found in the cytosol. It catalyses the reaction 3-hydroxyanthranilate + O2 = (2Z,4Z)-2-amino-3-carboxymuconate 6-semialdehyde. It functions in the pathway cofactor biosynthesis; NAD(+) biosynthesis; quinolinate from L-kynurenine: step 3/3. In terms of biological role, catalyzes the oxidative ring opening of 3-hydroxyanthranilate to 2-amino-3-carboxymuconate semialdehyde, which spontaneously cyclizes to quinolinate. The protein is 3-hydroxyanthranilate 3,4-dioxygenase (Haao) of Mus musculus (Mouse).